The chain runs to 132 residues: ER membrane protein complex subunit 5 (132 aa).

Residues 1–3 (MAS) are Cytoplasmic-facing. The chain crosses the membrane as a helical span at residues 4-22 (SIWKGLVGIGLFALAHAAF). At 23 to 43 (SAAQHRSYMRLTEKEDETLPI) the chain is on the lumenal side. Residues 44 to 63 (DIVLQTLLAFIVACYGIVHI) form a helical membrane-spanning segment. The Cytoplasmic segment spans residues 64–132 (AGEFKDMDAT…KLSKLESMHR (69 aa)).

It belongs to the membrane magnesium transporter (TC 1.A.67) family. As to quaternary structure, component of the ER membrane protein complex (EMC).

The protein localises to the endoplasmic reticulum membrane. It localises to the golgi apparatus membrane. It is found in the early endosome membrane. In terms of biological role, part of the endoplasmic reticulum membrane protein complex (EMC) that enables the energy-independent insertion into endoplasmic reticulum membranes of newly synthesized membrane proteins. Preferentially accommodates proteins with transmembrane domains that are weakly hydrophobic or contain destabilizing features such as charged and aromatic residues. Involved in the cotranslational insertion of multi-pass membrane proteins in which stop-transfer membrane-anchor sequences become ER membrane spanning helices. It is also required for the post-translational insertion of tail-anchored/TA proteins in endoplasmic reticulum membranes. By mediating the proper cotranslational insertion of N-terminal transmembrane domains in an N-exo topology, with translocated N-terminus in the lumen of the ER, controls the topology of multi-pass membrane proteins like the G protein-coupled receptors. By regulating the insertion of various proteins in membranes, it is indirectly involved in many cellular processes. May be involved in Mg(2+) transport. The polypeptide is ER membrane protein complex subunit 5 (Xenopus tropicalis (Western clawed frog)).